The chain runs to 250 residues: Ribosomal RNA small subunit methyltransferase J (250 aa).

Residues 101–102 (RD), 117–118 (ER), 153–154 (SS), and Asp-171 each bind S-adenosyl-L-methionine.

The protein belongs to the methyltransferase superfamily. RsmJ family.

The protein localises to the cytoplasm. The catalysed reaction is guanosine(1516) in 16S rRNA + S-adenosyl-L-methionine = N(2)-methylguanosine(1516) in 16S rRNA + S-adenosyl-L-homocysteine + H(+). Its function is as follows. Specifically methylates the guanosine in position 1516 of 16S rRNA. This chain is Ribosomal RNA small subunit methyltransferase J, found in Shigella boydii serotype 18 (strain CDC 3083-94 / BS512).